The primary structure comprises 150 residues: Ribonuclease HI (150 aa).

The RNase H type-1 domain occupies 1–141 (MKLINAYTDG…VDVLARGQAM (141 aa)). The Mg(2+) site is built by D9, E47, D69, and D133.

This sequence belongs to the RNase H family. As to quaternary structure, monomer. Mg(2+) serves as cofactor.

It localises to the cytoplasm. It carries out the reaction Endonucleolytic cleavage to 5'-phosphomonoester.. Its function is as follows. Endonuclease that specifically degrades the RNA of RNA-DNA hybrids. The protein is Ribonuclease HI of Xylella fastidiosa (strain Temecula1 / ATCC 700964).